We begin with the raw amino-acid sequence, 103 residues long: Small ribosomal subunit protein uS10 (103 aa).

It belongs to the universal ribosomal protein uS10 family. Part of the 30S ribosomal subunit.

In terms of biological role, involved in the binding of tRNA to the ribosomes. In Shewanella loihica (strain ATCC BAA-1088 / PV-4), this protein is Small ribosomal subunit protein uS10.